A 246-amino-acid chain; its full sequence is UL16-binding protein 2 (246 aa).

An N-terminal signal peptide occupies residues 1–25 (MAAAAATKILLCLPLLLLLSGWSRA). Positions 29–117 (DPHSLCYDIT…IQLENYTPKE (89 aa)) are MHC class I alpha-1 like. C50 and C66 are disulfide-bonded. N68 and N82 each carry an N-linked (GlcNAc...) asparagine glycan. Residues 118–210 (PLTLQARMSC…MDSTLEPSAG (93 aa)) are MHC class I alpha-2 like. An intrachain disulfide couples C127 to C190. S216 contributes to the a protein binding site. S217 is lipidated: GPI-anchor amidated serine. Residues 218–246 (GTTQLRATATTLILCCLLIILPCFILPGI) constitute a propeptide, removed in mature form.

The protein belongs to the MHC class I family. Interacts with KLRK1/NKG2D. Does not bind to beta2-microglobulin. In terms of assembly, (Microbial infection) In CMV-infected cells, interacts with the viral glycoprotein UL16; this interaction causes ULBP2 retention in the endoplasmic reticulum and cis-Golgi and prevents binding to and activation of KLRK1/NKG2D, providing CMV with an immune evasion mechanism. In terms of tissue distribution, expressed in various types of cancer cell lines and in the fetus, but not in normal tissues.

Its subcellular location is the cell membrane. The protein localises to the endoplasmic reticulum. The protein resides in the secreted. In terms of biological role, binds and activates the KLRK1/NKG2D receptor, mediating natural killer cell cytotoxicity. This is UL16-binding protein 2 from Homo sapiens (Human).